The chain runs to 129 residues: Small ribosomal subunit protein uS11 (129 aa).

This sequence belongs to the universal ribosomal protein uS11 family. In terms of assembly, part of the 30S ribosomal subunit. Interacts with proteins S7 and S18. Binds to IF-3.

In terms of biological role, located on the platform of the 30S subunit, it bridges several disparate RNA helices of the 16S rRNA. Forms part of the Shine-Dalgarno cleft in the 70S ribosome. This chain is Small ribosomal subunit protein uS11, found in Aromatoleum aromaticum (strain DSM 19018 / LMG 30748 / EbN1) (Azoarcus sp. (strain EbN1)).